Reading from the N-terminus, the 95-residue chain is Translation initiation factor 1A (95 aa).

Residues 6 to 80 (SRKNLRMPEE…EKADITWRYE (75 aa)) form the S1-like domain.

Belongs to the eIF-1A family.

In terms of biological role, seems to be required for maximal rate of protein biosynthesis. Enhances ribosome dissociation into subunits and stabilizes the binding of the initiator Met-tRNA(I) to 40 S ribosomal subunits. This Haloarcula marismortui (strain ATCC 43049 / DSM 3752 / JCM 8966 / VKM B-1809) (Halobacterium marismortui) protein is Translation initiation factor 1A.